Reading from the N-terminus, the 179-residue chain is Large ribosomal subunit protein uL5 (179 aa).

The protein belongs to the universal ribosomal protein uL5 family. Part of the 50S ribosomal subunit; part of the 5S rRNA/L5/L18/L25 subcomplex. Contacts the 5S rRNA and the P site tRNA. Forms a bridge to the 30S subunit in the 70S ribosome.

In terms of biological role, this is one of the proteins that bind and probably mediate the attachment of the 5S RNA into the large ribosomal subunit, where it forms part of the central protuberance. In the 70S ribosome it contacts protein S13 of the 30S subunit (bridge B1b), connecting the 2 subunits; this bridge is implicated in subunit movement. Contacts the P site tRNA; the 5S rRNA and some of its associated proteins might help stabilize positioning of ribosome-bound tRNAs. The sequence is that of Large ribosomal subunit protein uL5 from Shewanella piezotolerans (strain WP3 / JCM 13877).